Reading from the N-terminus, the 156-residue chain is Arginine repressor (156 aa).

Belongs to the ArgR family.

The protein localises to the cytoplasm. It participates in amino-acid biosynthesis; L-arginine biosynthesis [regulation]. Functionally, regulates arginine biosynthesis genes. This is Arginine repressor from Salmonella paratyphi C (strain RKS4594).